A 329-amino-acid chain; its full sequence is MSAEASGPAPAAAECLESPSPSSVEPGSPSYSLKPLTPNSKYVKLNVGGSLHYTTLRTLTGQDTMLKAMFSGRVEVLTDAGGWVLIDRSGRHFGTILNYLRDGSVPLPESARELGELLGEARYYLVQGLIEDCQLALQQKREKLSPLCLIPTVTSPREEQQLLASTSKPVVKLLHNRSNNKYSYTSTSDDNLLKNIELFDKLALRFHGRLLFLKDVLGDEICCWSFYGQGRKIAEVCCTSIVYATEKKQTKVEFPEARIFEETLNILIYENSRGPDLALLEATGGAAGGGGAGRGDDEENREHRVRRIHVRRHITHDERPHGQQIVFKD.

The interval 1 to 31 (MSAEASGPAPAAAECLESPSPSSVEPGSPSY) is disordered. The region spanning 41 to 109 (KYVKLNVGGS…LRDGSVPLPE (69 aa)) is the BTB domain.

This sequence belongs to the BACURD family. Homotetramer; forms a two-fold symmetric tetramer in solution. Interacts with CUL3; interaction is direct and forms a 5:5 heterodecamer. Component of the BCR(KCTD13) E3 ubiquitin ligase complex, at least composed of CUL3, KCTD13/BACURD1 and RBX1. Interacts with RHOA; with a preference for RhoA-GDP. Interacts with POLD2 and PCNA. Interacts with SPRTN.

The protein localises to the nucleus. It functions in the pathway protein modification; protein ubiquitination. Substrate-specific adapter of a BCR (BTB-CUL3-RBX1) E3 ubiquitin-protein ligase complex required for synaptic transmission. The BCR(KCTD13) E3 ubiquitin ligase complex mediates the ubiquitination of RHOA, leading to its degradation by the proteasome, thereby regulating the actin cytoskeleton and promoting synaptic transmission. The sequence is that of BTB/POZ domain-containing adapter for CUL3-mediated RhoA degradation protein 1 (Kctd13) from Mus musculus (Mouse).